We begin with the raw amino-acid sequence, 217 residues long: ATP-dependent Clp protease proteolytic subunit (217 aa).

Serine 121 (nucleophile) is an active-site residue. Histidine 146 is a catalytic residue.

Belongs to the peptidase S14 family. In terms of assembly, fourteen ClpP subunits assemble into 2 heptameric rings which stack back to back to give a disk-like structure with a central cavity, resembling the structure of eukaryotic proteasomes.

The protein localises to the cytoplasm. The catalysed reaction is Hydrolysis of proteins to small peptides in the presence of ATP and magnesium. alpha-casein is the usual test substrate. In the absence of ATP, only oligopeptides shorter than five residues are hydrolyzed (such as succinyl-Leu-Tyr-|-NHMec, and Leu-Tyr-Leu-|-Tyr-Trp, in which cleavage of the -Tyr-|-Leu- and -Tyr-|-Trp bonds also occurs).. Cleaves peptides in various proteins in a process that requires ATP hydrolysis. Has a chymotrypsin-like activity. Plays a major role in the degradation of misfolded proteins. The polypeptide is ATP-dependent Clp protease proteolytic subunit (Burkholderia mallei (strain NCTC 10247)).